A 244-amino-acid polypeptide reads, in one-letter code: Centromere protein H (244 aa).

An N-acetylmethionine modification is found at methionine 1. Residues 1–33 (METQSEEQAVTKPADSGGEGGPPQVAGAQAARP) form a disordered region. Serine 16 bears the Phosphoserine mark. A compositionally biased stretch (low complexity) spans 22 to 31 (PPQVAGAQAA). Residue lysine 64 forms a Glycyl lysine isopeptide (Lys-Gly) (interchain with G-Cter in SUMO2) linkage. Threonine 65 carries the phosphothreonine modification. Coiled coils occupy residues 66–104 (PEQI…DRMQ) and 146–189 (DLEE…MENS).

This sequence belongs to the CENP-H/MCM16 family. In terms of assembly, self-associates. Component of the CENPA-NAC complex, at least composed of CENPA, CENPC, CENPH, CENPM, CENPN, CENPT and CENPU. The CENPA-NAC complex interacts with the CENPA-CAD complex, composed of CENPI, CENPK, CENPL, CENPO, CENPP, CENPQ, CENPR and CENPS. Interacts with KIF2C and NDC80.

It localises to the nucleus. Its subcellular location is the chromosome. The protein localises to the centromere. The protein resides in the kinetochore. In terms of biological role, component of the CENPA-NAC (nucleosome-associated) complex, a complex that plays a central role in assembly of kinetochore proteins, mitotic progression and chromosome segregation. The CENPA-NAC complex recruits the CENPA-CAD (nucleosome distal) complex and may be involved in incorporation of newly synthesized CENPA into centromeres. This Bos taurus (Bovine) protein is Centromere protein H (CENPH).